An 843-amino-acid chain; its full sequence is Vacuolar membrane protease (843 aa).

The Cytoplasmic portion of the chain corresponds to Met-1 to Ala-16. A helical transmembrane segment spans residues Phe-17–Leu-37. Over Asp-38–Asn-347 the chain is Vacuolar. N-linked (GlcNAc...) asparagine glycans are attached at residues Asn-96, Asn-109, and Asn-117. His-147 and Asp-159 together coordinate Zn(2+). Glu-191 (proton acceptor) is an active-site residue. A Zn(2+)-binding site is contributed by Glu-192. Asn-209 is a glycosylation site (N-linked (GlcNAc...) asparagine). A Zn(2+)-binding site is contributed by Glu-217. The N-linked (GlcNAc...) asparagine glycan is linked to Asn-275. His-292 is a Zn(2+) binding site. A glycan (N-linked (GlcNAc...) asparagine) is linked at Asn-322. A helical membrane pass occupies residues Leu-348–Leu-368. Residues Thr-369–Thr-386 are Cytoplasmic-facing. A helical transmembrane segment spans residues Val-387 to Leu-407. At Thr-408–Ser-417 the chain is on the vacuolar side. Residues His-418–Phe-438 traverse the membrane as a helical segment. The Cytoplasmic segment spans residues Arg-439–Glu-456. A helical membrane pass occupies residues Ile-457–Leu-477. Over Ser-478–Gly-484 the chain is Vacuolar. A helical membrane pass occupies residues Ser-485–Ile-505. The Cytoplasmic portion of the chain corresponds to Arg-506 to Asn-566. Residues Ile-567–Ile-587 form a helical membrane-spanning segment. Residues Leu-588–Lys-608 are Vacuolar-facing. The helical transmembrane segment at Leu-609–Phe-629 threads the bilayer. The Cytoplasmic segment spans residues Arg-630 to Ser-636. A helical transmembrane segment spans residues Leu-637–Phe-657. The Vacuolar portion of the chain corresponds to Thr-658–Ile-843. Asn-677, Asn-703, Asn-707, Asn-754, and Asn-788 each carry an N-linked (GlcNAc...) asparagine glycan.

The protein belongs to the peptidase M28 family. Zn(2+) is required as a cofactor.

It localises to the membrane. The protein resides in the vacuole membrane. In terms of biological role, may be involved in vacuolar sorting and osmoregulation. This chain is Vacuolar membrane protease, found in Schizosaccharomyces pombe (strain 972 / ATCC 24843) (Fission yeast).